Reading from the N-terminus, the 392-residue chain is Alkaline phosphatase L (392 aa).

The first 23 residues, 1–23, serve as a signal peptide directing secretion; it reads MYKRSLIAASLSVAALVSAQAMA.

It belongs to the PstS family. Homodimer.

It localises to the secreted. The protein resides in the periplasm. It catalyses the reaction a phosphate monoester + H2O = an alcohol + phosphate. Its function is as follows. Has both a phosphomonoesterase and phosphodiesterase activity. This Pseudomonas aeruginosa (strain UCBPP-PA14) protein is Alkaline phosphatase L.